A 130-amino-acid polypeptide reads, in one-letter code: MLGGSSDAGLATAAARGQVETVRQLLEAGADPNALNRFGRRPIQVMMMGSAQVAELLLLHGAEPNCADPATLTRPVHDAAREGFLDTLVVLHRAGARLDVCDAWGRLPVDLAEEQGHRDIARYLHAATGD.

ANK repeat units lie at residues 5 to 34 (SSDAGLATAAARGQVETVRQLLEAGADPNA), 38 to 66 (FGRRPIQVMMMGSAQVAELLLLHGAEPNC), 71 to 100 (TLTRPVHDAAREGFLDTLVVLHRAGARLDV), and 104 to 130 (WGRLPVDLAEEQGHRDIARYLHAATGD). Thr12 carries the phosphothreonine modification.

This sequence belongs to the CDKN2 cyclin-dependent kinase inhibitor family. Heterodimer of CDKN2B with CDK4 or CDK6. Expressed ubiquitously.

In terms of biological role, interacts strongly with CDK4 and CDK6. Potent inhibitor. Potential effector of TGF-beta induced cell cycle arrest. This is Cyclin-dependent kinase 4 inhibitor B (Cdkn2b) from Mus musculus (Mouse).